Reading from the N-terminus, the 301-residue chain is Probable serine acetyltransferase 3 (301 aa).

Residues 280–301 (IGKKAEPQRELPGVTMEQRWSD) are disordered.

The protein belongs to the transferase hexapeptide repeat family. Homomultimer.

The enzyme catalyses L-serine + acetyl-CoA = O-acetyl-L-serine + CoA. It functions in the pathway amino-acid biosynthesis; L-cysteine biosynthesis; L-cysteine from L-serine: step 1/2. The sequence is that of Probable serine acetyltransferase 3 (SAT3) from Oryza sativa subsp. japonica (Rice).